The primary structure comprises 368 residues: Ubiquitin domain-containing protein UBFD1 (368 aa).

Positions 106–139 (SCDARGNLQPAPAQPPGDPAAQASVSNGEDAGGG) are disordered. In terms of domain architecture, Ubiquitin-like spans 143 to 218 (ELVDLKIIWN…IMVVGSTIND (76 aa)). Residues 231–263 (QDAKAEENKKEPLCRQKQHRKVLDKGKPEDVMP) form a disordered region. Composition is skewed to basic and acidic residues over residues 233-244 (AKAEENKKEPLC) and 251-260 (KVLDKGKPED).

The protein is Ubiquitin domain-containing protein UBFD1 (Ubfd1) of Mus musculus (Mouse).